A 537-amino-acid chain; its full sequence is Mitochondria-eating protein (537 aa).

An interaction with YWHAG/14-3-3 protein gamma region spans residues 1–270 (MAESLKKLAK…SHSRSRSHSR (270 aa)). Ser13, Ser85, Ser123, Ser127, Ser154, and Ser157 each carry phosphoserine. Residues 109–150 (SKNRDNSPDQDQHQSDNESFSETQPTQVQDDLAESGKSLEGA) form a disordered region. The span at 110-124 (KNRDNSPDQDQHQSD) shows a compositional bias: basic and acidic residues. Residues 125-137 (NESFSETQPTQVQ) show a composition bias toward polar residues. Coiled coils occupy residues 152–184 (NGST…ARHK) and 210–243 (QDVV…RSAR). Disordered regions lie at residues 171–212 (QLKS…PQDV) and 233–291 (EKSG…RAKM). Over residues 179-209 (EDARHKTSENRRSEALKSDHRSTKRTQDQRP) the composition is skewed to basic and acidic residues. The segment covering 239 to 251 (GRSARSPSPSTGT) has biased composition (low complexity). Residues 252–269 (RSHRRGRSRSHSRSRSHS) show a composition bias toward basic residues. 3 positions are modified to phosphoserine: Ser283, Ser285, and Ser508.

This sequence belongs to the MIEAP family. As to quaternary structure, interacts (via coiled-coil domains) with BNIP3L (via BH3 domain). Interacts (via coiled-coil domains) with BNIP3 (via BH3 domain). Interacts with YWHAG/14-3-3 protein gamma; a protein that also plays a role in MALM. In terms of tissue distribution, in testis, expressed primarily in spermatids.

The protein resides in the cytoplasm. Its subcellular location is the cytosol. It localises to the mitochondrion outer membrane. It is found in the mitochondrion matrix. Functionally, key regulator of mitochondrial quality that mediates the repairing or degradation of unhealthy mitochondria in response to mitochondrial damage. Mediator of mitochondrial protein catabolic process (also named MALM) by mediating the degradation of damaged proteins inside mitochondria by promoting the accumulation in the mitochondrial matrix of hydrolases that are characteristic of the lysosomal lumen. Also involved in mitochondrion degradation of damaged mitochondria by promoting the formation of vacuole-like structures (named MIV), which engulf and degrade unhealthy mitochondria by accumulating lysosomes. The physical interaction of SPATA18/MIEAP, BNIP3 and BNIP3L/NIX at the mitochondrial outer membrane regulates the opening of a pore in the mitochondrial double membrane in order to mediate the translocation of lysosomal proteins from the cytoplasm to the mitochondrial matrix. Binds cardiolipin. May form molecular condensates (non-membrane-bounded organelles) within mitochondria that compartmentalize and promote cardiolipin metabolism. The sequence is that of Mitochondria-eating protein (Spata18) from Mus musculus (Mouse).